The sequence spans 317 residues: NAC domain-containing protein 55 (317 aa).

Residues 14 to 162 enclose the NAC domain; it reads LPPGFRFYPT…DWVLCRIYKK (149 aa). A DNA-binding region spans residues 111 to 168; that stretch reads VGIKKALVFYIGKAPKGTKTNWIMHEYRLIEPSRRNGSTKLDDWVLCRIYKKQTSAQK.

Expressed in leaves.

It is found in the nucleus. In terms of biological role, transcription factors that bind specifically to the 5'-CATGTG-3' motif. The polypeptide is NAC domain-containing protein 55 (NAC055) (Arabidopsis thaliana (Mouse-ear cress)).